We begin with the raw amino-acid sequence, 320 residues long: Probable serine proteinase inhibitor 1 (320 aa).

This sequence belongs to the serpin family. Poxviruses subfamily.

This is Probable serine proteinase inhibitor 1 (SPI-1) from Swinepox virus (strain Kasza) (SWPV).